Reading from the N-terminus, the 541-residue chain is 2-hydroxyacylsphingosine 1-beta-galactosyltransferase (541 aa).

An N-terminal signal peptide occupies residues 1 to 20 (MKSYTPYFMLLWSAVGIARA). N-linked (GlcNAc...) asparagine glycosylation is found at N78, N333, and N442. Residues 472-492 (YFLLDIAFVLLLGAVLLYFIL) form a helical membrane-spanning segment. Residues 518-541 (HYQNGIRNGKYKGNGRVKHEKKVR) are disordered. Basic residues predominate over residues 526 to 541 (GKYKGNGRVKHEKKVR).

The protein belongs to the UDP-glycosyltransferase family.

Its subcellular location is the membrane. It localises to the endoplasmic reticulum. The catalysed reaction is an N-acylsphing-4-enine + UDP-alpha-D-galactose = a beta-D-galactosyl-(1&lt;-&gt;1')-N-acylsphing-4-enine + UDP + H(+). The enzyme catalyses N-(2-hydroxy-hexanoyl)-sphing-4-enine + UDP-alpha-D-galactose = N-(2-hydroxy-hexanoyl)-beta-D-galactosyl-sphing-4-enine + UDP + H(+). It catalyses the reaction N-(2-hydroxy-hexanoyl)-sphinganine + UDP-alpha-D-galactose = N-(2-hydroxyhexanoyl)-beta-D-galactosylsphinganine + UDP + H(+). It carries out the reaction an N-acyl-sphingoid base + UDP-alpha-D-galactose = a D-galactosylceramide + UDP + H(+). It functions in the pathway sphingolipid metabolism; galactosylceramide biosynthesis. Catalyzes the transfer of galactose to ceramide, a key enzymatic step in the biosynthesis of galactocerebrosides, which are abundant sphingolipids of the myelin membrane of the central nervous system and peripheral nervous system. Galactosylates both hydroxy- and non-hydroxy fatty acid-containing ceramides and diglycerides. The chain is 2-hydroxyacylsphingosine 1-beta-galactosyltransferase from Mus musculus (Mouse).